The following is a 1699-amino-acid chain: Cilia- and flagella-associated protein 61 (1699 aa).

Positions 1-22 (MYSNNQLDNPNHSRSQYRNGDQ) are enriched in polar residues. Disordered stretches follow at residues 1-23 (MYSNNQLDNPNHSRSQYRNGDQS), 489-515 (QLKRPQKKVTKRPKRQKEEDKKEDEFK), and 1340-1365 (ERDANSENADKGFDDTQSRDGDEENQ). Residues 489-503 (QLKRPQKKVTKRPKR) are compositionally biased toward basic residues. 2 stretches are compositionally biased toward basic and acidic residues: residues 504–515 (QKEEDKKEDEFK) and 1340–1359 (ERDANSENADKGFDDTQSRD).

The protein resides in the cell projection. It is found in the cilium. Its function is as follows. As component of a spoke-associated complex, regulates ciliary mobility by mediating a stable and functional assembly of the radial spoke 3 (RS3). This chain is Cilia- and flagella-associated protein 61, found in Tetrahymena thermophila (strain SB210).